A 514-amino-acid polypeptide reads, in one-letter code: Importin subunit alpha-3 (514 aa).

One can recognise an IBB domain in the interval 1 to 51 (MSSNRQAYYKNNAKEQIGKEKRNEEVVSIRKDKREEAISKRRNINTQIEDD). Positions 1-62 (MSSNRQAYYK…ETSTTPPGPF (62 aa)) are disordered. The span at 12–39 (NAKEQIGKEKRNEEVVSIRKDKREEAIS) shows a compositional bias: basic and acidic residues. ARM repeat units lie at residues 101–142 (IDDL…TSEQ), 143–187 (TQAV…FRDY), 188–226 (CLEL…CKDP), 227–271 (APSP…EHIQ), 272–311 (MVIE…TDEQ), 312–353 (TQLV…NQQQ), 354–393 (VQDV…ISGR), and 394–436 (PNQV…KMAG). Positions 485–514 (GNVEGAQSSAFGGDVPPVPDAPNGGWNFGK) are disordered.

It belongs to the importin alpha family. Forms a complex with an importin beta subunit. May interact with transcription factor cebp-1 (via N-terminus). Interacts with cmk-1; affinity for cmk-1 is increased in the presence of Ca(2+) and calmodulin and leads to increased nuclear accumulation of cmk-1 in FLP neurons upon prolonged heat activation. In terms of tissue distribution, expressed in larval and adult germline and somatic tissues, including neurons.

Its subcellular location is the cytoplasm. It localises to the nucleus. Functionally, binds specifically and directly to substrates containing either a simple or bipartite NLS motif. Promotes docking of import substrates to the nuclear envelope. Seems to act as a cytosolic receptor for both simple and bipartite NLS motifs. Necessary for correct nucleoporin localization within the germline. Essential gene for embryonic and larval development. May be dispensable for axon development, but required for axon regeneration in both mechanosensory and motor neurons. Required for oogenic development, ima-1 and ima-2 cannot functionally compensate for loss of ima-3. This is Importin subunit alpha-3 (ima-3) from Caenorhabditis elegans.